A 551-amino-acid polypeptide reads, in one-letter code: Membrane protein insertase YidC (551 aa).

Residues 3–23 (ANHIRILLLVTIAIMFISLMG) traverse the membrane as a helical segment. The span at 33–47 (NTKQQTSATQNNSHY) shows a compositional bias: polar residues. The segment at 33–58 (NTKQQTSATQNNSHYDNADSSTNTDV) is disordered. Helical transmembrane passes span 361–381 (LVGN…LIFY), 431–451 (LSGC…YWVL), and 504–524 (VMMF…SGLV).

The protein belongs to the OXA1/ALB3/YidC family. Type 1 subfamily. As to quaternary structure, interacts with the Sec translocase complex via SecD. Specifically interacts with transmembrane segments of nascent integral membrane proteins during membrane integration.

The protein localises to the cell inner membrane. Its function is as follows. Required for the insertion and/or proper folding and/or complex formation of integral membrane proteins into the membrane. Involved in integration of membrane proteins that insert both dependently and independently of the Sec translocase complex, as well as at least some lipoproteins. Aids folding of multispanning membrane proteins. This Francisella tularensis subsp. novicida (strain U112) protein is Membrane protein insertase YidC.